The following is a 97-amino-acid chain: UPF0250 protein RSc0326 (97 aa).

This sequence belongs to the UPF0250 family.

The chain is UPF0250 protein RSc0326 from Ralstonia nicotianae (strain ATCC BAA-1114 / GMI1000) (Ralstonia solanacearum).